Reading from the N-terminus, the 148-residue chain is UPF0178 protein CA_C2825 (148 aa).

The protein belongs to the UPF0178 family.

The protein is UPF0178 protein CA_C2825 of Clostridium acetobutylicum (strain ATCC 824 / DSM 792 / JCM 1419 / IAM 19013 / LMG 5710 / NBRC 13948 / NRRL B-527 / VKM B-1787 / 2291 / W).